A 240-amino-acid polypeptide reads, in one-letter code: MATLFIADLHLQTEEPAIVAGFLRFLAVEARQADALYILGDLFEAWIGDDDPNPLHREIAAAIKAVVNVGVPCFFIHGNRDFLIGKRFARESGMILLPQEKVLDLYGRNVLIMHGDTLCTDDAGYQAFRAKVHNPWVQRLFLTLPLFIRRRIAARMRAGSKAANSSKSLDIMDVNAQTVVAEMEKHRVQWLIHGHTHRPAVHELSANDQPAFRVVLGAWHHEGSMVKVTPDNVELIAFPL.

Mn(2+) is bound by residues Asp8, His10, Asp41, Asn79, and His114. Residue 79–80 coordinates substrate; that stretch reads NR. Residues Asp122, Ser160, Asn164, Lys167, and His195 each coordinate substrate. Mn(2+) contacts are provided by His195 and His197.

Belongs to the LpxH family. Mn(2+) is required as a cofactor.

It localises to the cell inner membrane. The catalysed reaction is UDP-2-N,3-O-bis[(3R)-3-hydroxytetradecanoyl]-alpha-D-glucosamine + H2O = 2-N,3-O-bis[(3R)-3-hydroxytetradecanoyl]-alpha-D-glucosaminyl 1-phosphate + UMP + 2 H(+). It functions in the pathway glycolipid biosynthesis; lipid IV(A) biosynthesis; lipid IV(A) from (3R)-3-hydroxytetradecanoyl-[acyl-carrier-protein] and UDP-N-acetyl-alpha-D-glucosamine: step 4/6. Its function is as follows. Hydrolyzes the pyrophosphate bond of UDP-2,3-diacylglucosamine to yield 2,3-diacylglucosamine 1-phosphate (lipid X) and UMP by catalyzing the attack of water at the alpha-P atom. Involved in the biosynthesis of lipid A, a phosphorylated glycolipid that anchors the lipopolysaccharide to the outer membrane of the cell. The protein is UDP-2,3-diacylglucosamine hydrolase of Salmonella dublin (strain CT_02021853).